We begin with the raw amino-acid sequence, 186 residues long: Peptide deformylase (186 aa).

Residues Cys-113 and His-157 each contribute to the Fe cation site. Residue Glu-158 is part of the active site. His-161 provides a ligand contact to Fe cation.

This sequence belongs to the polypeptide deformylase family. Fe(2+) serves as cofactor.

The catalysed reaction is N-terminal N-formyl-L-methionyl-[peptide] + H2O = N-terminal L-methionyl-[peptide] + formate. Functionally, removes the formyl group from the N-terminal Met of newly synthesized proteins. Requires at least a dipeptide for an efficient rate of reaction. N-terminal L-methionine is a prerequisite for activity but the enzyme has broad specificity at other positions. The sequence is that of Peptide deformylase from Malacoplasma penetrans (strain HF-2) (Mycoplasma penetrans).